A 153-amino-acid polypeptide reads, in one-letter code: Ribosome maturation factor RimP (153 aa).

Belongs to the RimP family.

It localises to the cytoplasm. Its function is as follows. Required for maturation of 30S ribosomal subunits. The chain is Ribosome maturation factor RimP from Acidithiobacillus ferrooxidans (strain ATCC 53993 / BNL-5-31) (Leptospirillum ferrooxidans (ATCC 53993)).